The following is a 334-amino-acid chain: Inositol 2-dehydrogenase (334 aa).

The protein belongs to the Gfo/Idh/MocA family. As to quaternary structure, homotetramer.

The enzyme catalyses myo-inositol + NAD(+) = scyllo-inosose + NADH + H(+). Involved in the oxidation of myo-inositol (MI) to 2-keto-myo-inositol (2KMI or 2-inosose). The polypeptide is Inositol 2-dehydrogenase (Cereibacter sphaeroides (strain ATCC 17023 / DSM 158 / JCM 6121 / CCUG 31486 / LMG 2827 / NBRC 12203 / NCIMB 8253 / ATH 2.4.1.) (Rhodobacter sphaeroides)).